The following is a 2570-amino-acid chain: Highly reducing polyketide synthase tstA (2570 aa).

The region spanning 16 to 443 (AMPIAVVGIG…GANAHVVLEN (428 aa)) is the Ketosynthase family 3 (KS3) domain. Residues Cys-191, His-326, and His-366 each act as for beta-ketoacyl synthase activity in the active site. Residues 458 to 478 (HTRKSATESSGTSTPSNPGPH) are disordered. Residues 464-478 (TESSGTSTPSNPGPH) are compositionally biased toward low complexity. Positions 567–898 (FVFTGQGAQW…YSALVRNKNA (332 aa)) constitute a Malonyl-CoA:ACP transacylase (MAT) domain. Residues 965 to 1103 (TDLLGVLERN…GLVSVVAPQK (139 aa)) form an N-terminal hotdog fold region. Positions 965–1293 (TDLLGVLERN…CATLAREGAD (329 aa)) constitute a PKS/mFAS DH domain. His-997 acts as the Proton acceptor; for dehydratase activity in catalysis. The segment at 1133–1293 (RRNINVPQFY…CATLAREGAD (161 aa)) is C-terminal hotdog fold. The Proton donor; for dehydratase activity role is filled by Asp-1198. Residues 1343-1645 (LERAAYYMLK…IATSINSNNY (303 aa)) form a methyltransferase (CMeT) domain region. In terms of domain architecture, Enoyl reductase (ER) spans 1866 to 2178 (GLLDSIFWTD…TGGHMGKLVG (313 aa)). Residues 2202–2379 (ASYVLIGGLG…ATTIDLGAIS (178 aa)) form the Ketoreductase (KR) domain. Residues 2482-2559 (DASELILGAL…HLATKIAQRS (78 aa)) enclose the Carrier domain. Ser-2519 carries the post-translational modification O-(pantetheine 4'-phosphoryl)serine.

The cofactor is pantetheine 4'-phosphate.

It participates in secondary metabolite biosynthesis. Highly reducing polyketide synthase; part of the gene cluster that mediates the biosynthesis of the antihypercholesterolemic agents phomoidrides which are dimeric anhydrides. The pathway begins with the highly reducing polyketide synthase tstA that catalyzes the formation of a C12-fatty acyl-ACP, starting from one acetate and 5 malonate units. The hydrolase tstM is involved in the release of the C12-fatty acyl chain from tstA. The alkylcitrate synthase (ACS) tstJ and the alkylcitrate dehydratase (ACDH) tstI then give rise to decarboxylated monomeric anhydrides by coupling the C12-fatty acyl chain with oxalacetic acid. The cyclase tstC is responsible for the dimerization of the monomeric anhydrides which leads to the production of prephomoidride that contains the characteristic bicyclo[4.3.1]deca-1,6-diene system of phomoidrides. Iterative oxidation catalyzed by the alpha-ketoglutarate-dependent dioxygenase tstK produced then phomoidride A. Finally, the methyltransferase tstE converts phomoidride A to phomoidride B via an acetalization reaction. The phosphatidylethanolamine-binding protein tstB and tstN are not essential for dimerization and their functions have still to be determined. This is Highly reducing polyketide synthase tstA from Talaromyces stipitatus (strain ATCC 10500 / CBS 375.48 / QM 6759 / NRRL 1006) (Penicillium stipitatum).